A 337-amino-acid polypeptide reads, in one-letter code: PHD finger protein 11 (337 aa).

Residues 25-61 form a C2HC pre-PHD-type zinc finger; sequence KRTCALCPEGHEWSQIYFSPSGNIVAHENCLLYSSGL. The PHD-type zinc-finger motif lies at 91–143; it reads LKCSFCNKGGATVGCDLWFCKKSYHYVCAKKDQAILQVDGNHGTYKLFCPEHS. Disordered regions lie at residues 145-196 and 301-337; these read EQEE…HGHT and GDLD…GDSL. Basic and acidic residues predominate over residues 187–196; it reads HMTEEPHGHT. Composition is skewed to polar residues over residues 301 to 312 and 323 to 337; these read GDLDCSSSTSGS and SQES…GDSL.

In terms of assembly, interacts with BRCA1 and RELA.

The protein localises to the nucleus. In terms of biological role, positive regulator of Th1-type cytokine gene expression. This Mus musculus (Mouse) protein is PHD finger protein 11 (Phf11).